The sequence spans 729 residues: Sodium-dependent neutral amino acid transporter B(0)AT2 (729 aa).

At 1 to 69 (MPKNSKVVKR…ERPAWNSKLQ (69 aa)) the chain is on the cytoplasmic side. Phosphoserine occurs at positions 25 and 55. 3 consecutive transmembrane segments (helical) span residues 70 to 90 (YILA…FPYL), 98 to 117 (AYLL…LFFL), and 142 to 162 (GIGF…NVII). Residues 163-225 (GWTLFYFSQS…SSISESGGLN (63 aa)) are Extracellular-facing. N-linked (GlcNAc...) asparagine glycosylation occurs at Asn-187. Helical transmembrane passes span 226 to 244 (WKMT…LAMI), 253 to 270 (IMYF…CFLI), 306 to 323 (VFFA…FSSY), and 335 to 356 (VLVS…FAVL). Residues 357-452 (GFKANIVNEK…FIAFTEAMTH (96 aa)) lie on the Extracellular side of the membrane. 2 N-linked (GlcNAc...) asparagine glycosylation sites follow: Asn-383 and Asn-394. Helical transmembrane passes span 453–472 (FPAS…NLGL), 496–514 (ILTV…MFVQ), 530–550 (TLPL…VYGI), 571–592 (YMWK…IVNM), and 620–642 (VVCF…IRRC). Residues 643–729 (NLIDDSSGNL…DMPDMPESDL (87 aa)) lie on the Cytoplasmic side of the membrane. 3 positions are modified to phosphoserine: Ser-687, Ser-699, and Ser-701.

It belongs to the sodium:neurotransmitter symporter (SNF) (TC 2.A.22) family. SLC6A15 subfamily. As to expression, widely distributed in the central nervous system, including the olfactory bulb, the hypothalamus, the cerebral cortex, the hippocampus, and the cerebellum. In addition, intense expression is found in the motor nuclei including the oculomotor nucleus, abducens nucleus, trigeminal motor nucleus, facial nucleus, hypoglossal nucleus and ventral horn of spinal cord. Intense hybridization signals are also observed in the nuclei containing monoaminergic neurons, such as locus coeruleus, the substantia nigra pars compacta, the ventral tegmental area, the dorsal raphe nucleus and the median raphe nucleus.

It localises to the membrane. The catalysed reaction is L-leucine(in) + Na(+)(in) = L-leucine(out) + Na(+)(out). It catalyses the reaction L-isoleucine(in) + Na(+)(in) = L-isoleucine(out) + Na(+)(out). It carries out the reaction L-methionine(in) + Na(+)(in) = L-methionine(out) + Na(+)(out). The enzyme catalyses L-proline(in) + Na(+)(in) = L-proline(out) + Na(+)(out). The catalysed reaction is L-alanine(in) + Na(+)(in) = L-alanine(out) + Na(+)(out). It catalyses the reaction L-asparagine(in) + Na(+)(in) = L-asparagine(out) + Na(+)(out). It carries out the reaction L-valine(in) + Na(+)(in) = L-valine(out) + Na(+)(out). The enzyme catalyses L-cysteine(in) + Na(+)(in) = L-cysteine(out) + Na(+)(out). The catalysed reaction is L-glutamine(in) + Na(+)(in) = L-glutamine(out) + Na(+)(out). It catalyses the reaction L-serine(in) + Na(+)(in) = L-serine(out) + Na(+)(out). It carries out the reaction L-threonine(in) + Na(+)(in) = L-threonine(out) + Na(+)(out). The enzyme catalyses L-pipecolate(in) + Na(+)(in) = L-pipecolate(out) + Na(+)(out). The catalysed reaction is L-phenylalanine(in) + Na(+)(in) = L-phenylalanine(out) + Na(+)(out). Its function is as follows. Functions as a sodium-dependent neutral amino acid transporter. Exhibits preference for the branched-chain amino acids, particularly leucine, valine and isoleucine and methionine. Can also transport low-affinity substrates such as alanine, phenylalanine, glutamine and pipecolic acid. Mediates the saturable, pH-sensitive and electrogenic cotransport of proline and sodium ions with a stoichiometry of 1:1. May have a role as transporter for neurotransmitter precursors into neurons. In contrast to other members of the neurotransmitter transporter family, does not appear to be chloride-dependent. The polypeptide is Sodium-dependent neutral amino acid transporter B(0)AT2 (Slc6a15) (Rattus norvegicus (Rat)).